The chain runs to 249 residues: Diaminopimelate epimerase (249 aa).

Residues Asn11 and Asn60 each coordinate substrate. Cys69 acts as the Proton donor in catalysis. Substrate is bound by residues 70–71, Asn164, and 182–183; these read GN and ER. Residue Cys192 is the Proton acceptor of the active site. 193 to 194 provides a ligand contact to substrate; the sequence is GT.

It belongs to the diaminopimelate epimerase family. Homodimer.

The protein resides in the cytoplasm. The enzyme catalyses (2S,6S)-2,6-diaminopimelate = meso-2,6-diaminopimelate. Its pathway is amino-acid biosynthesis; L-lysine biosynthesis via DAP pathway; DL-2,6-diaminopimelate from LL-2,6-diaminopimelate: step 1/1. Its function is as follows. Catalyzes the stereoinversion of LL-2,6-diaminopimelate (L,L-DAP) to meso-diaminopimelate (meso-DAP), a precursor of L-lysine and an essential component of the bacterial peptidoglycan. The protein is Diaminopimelate epimerase of Campylobacter jejuni subsp. jejuni serotype O:6 (strain 81116 / NCTC 11828).